The primary structure comprises 340 residues: Manganese-dependent ADP-ribose/CDP-alcohol diphosphatase (340 aa).

Position 1 is an N-acetylmethionine (M1). 7 residues coordinate Zn(2+): D25, Q27, D74, N110, H241, H278, and H280.

Belongs to the ADPRibase-Mn family. Monomer. The cofactor is Mg(2+).

It catalyses the reaction CDP-choline + H2O = phosphocholine + CMP + 2 H(+). The enzyme catalyses ADP-D-ribose + H2O = D-ribose 5-phosphate + AMP + 2 H(+). The catalysed reaction is CDP-glycerol + H2O = sn-glycerol 3-phosphate + CMP + 2 H(+). Functionally, hydrolyzes ADP-ribose, IDP-ribose, CDP-glycerol, CDP-choline and CDP-ethanolamine, but not other non-reducing ADP-sugars or CDP-glucose. May be involved in immune cell signaling as suggested by the second-messenger role of ADP-ribose, which activates TRPM2 as a mediator of oxidative/nitrosative stress. The polypeptide is Manganese-dependent ADP-ribose/CDP-alcohol diphosphatase (Adprm) (Mus musculus (Mouse)).